A 51-amino-acid chain; its full sequence is uncharacterized protein (51 aa).

This is an uncharacterized protein from Treponema pallidum (strain Nichols).